The sequence spans 235 residues: STARD3 N-terminal-like protein (235 aa).

At M1 the chain carries N-acetylmethionine. The disordered stretch occupies residues 1–20 (MNHLPEHMENTLTGSQSSHA). Over 1–53 (MNHLPEHMENTLTGSQSSHASLRDIHSINPAQLMARIESYEGREKKGISDVRR) the chain is Cytoplasmic. A compositionally biased stretch (polar residues) spans 10-20 (NTLTGSQSSHA). Phosphoserine occurs at positions 15, 21, and 27. Residues 48-218 (ISDVRRTFCL…YSPPESEAGS (171 aa)) enclose the MENTAL domain. A helical membrane pass occupies residues 54–74 (TFCLFVTFDLLFVTLLWIIEL). Residues 75 to 97 (NVNGGIENTLKKEVIHYDYYSSY) are Extracellular-facing. Residues 98–118 (FDIFLLAVFRFKVLILGYAVC) traverse the membrane as a helical segment. Residues 119–122 (RLRH) are Cytoplasmic-facing. The helical transmembrane segment at 123-143 (WWAIALTTAVTSAFLLAKVIL) threads the bilayer. Residues 144–150 (SKLFSQG) are Extracellular-facing. A helical transmembrane segment spans residues 151-171 (AFGYVLPIISFILAWIETWFL). At 172–235 (DFKVLPQEAE…QESEKPLLEL (64 aa)) the chain is on the cytoplasmic side. At S193 the chain carries Phosphoserine. The segment at 202-235 (GLSDGQFYSPPESEAGSEEEAEEKQESEKPLLEL) is disordered. The short motif at 208 to 213 (FYSPPE) is the FFAT element. Residues 225 to 235 (KQESEKPLLEL) are compositionally biased toward basic and acidic residues.

The protein belongs to the STARD3 family. As to quaternary structure, homodimer. Interacts (via the MENTAL domain) with STARD3NL. Interacts (via FFAT motif) with VAPA. Interacts (via FFAT motif) with VAPB. Interacts (via FFAT motif) with MOSPD2 (via MSP domain).

Its subcellular location is the late endosome membrane. Tethering protein that creates contact site between the endoplasmic reticulum and late endosomes: localizes to late endosome membranes and contacts the endoplasmic reticulum via interaction with VAPA and VAPB. This chain is STARD3 N-terminal-like protein, found in Mus musculus (Mouse).